Consider the following 181-residue polypeptide: Der GTPase-activating protein YihI (181 aa).

Disordered regions lie at residues methionine 1–proline 75 and glutamate 145–glycine 181. Basic residues predominate over residues arginine 32–leucine 43. The segment covering proline 146–glutamate 155 has biased composition (acidic residues). A compositionally biased stretch (basic and acidic residues) spans alanine 156 to aspartate 165. Residues aspartate 166–glycine 181 show a composition bias toward acidic residues.

This sequence belongs to the YihI family. As to quaternary structure, interacts with Der.

Its function is as follows. A GTPase-activating protein (GAP) that modifies Der/EngA GTPase function. May play a role in ribosome biogenesis. The sequence is that of Der GTPase-activating protein YihI from Vibrio vulnificus (strain YJ016).